Reading from the N-terminus, the 211-residue chain is Large ribosomal subunit protein uL3 (211 aa).

Belongs to the universal ribosomal protein uL3 family. In terms of assembly, part of the 50S ribosomal subunit. Forms a cluster with proteins L14 and L19.

Functionally, one of the primary rRNA binding proteins, it binds directly near the 3'-end of the 23S rRNA, where it nucleates assembly of the 50S subunit. The sequence is that of Large ribosomal subunit protein uL3 from Citrifermentans bemidjiense (strain ATCC BAA-1014 / DSM 16622 / JCM 12645 / Bem) (Geobacter bemidjiensis).